Consider the following 226-residue polypeptide: Exosome complex component Rrp4 (226 aa).

The S1 motif domain occupies asparagine 61 to arginine 135. One can recognise a KH domain in the interval aspartate 141–isoleucine 200.

Belongs to the RRP4 family. As to quaternary structure, component of the archaeal exosome complex. Forms a trimer of Rrp4 and/or Csl4 subunits. The trimer associates with a hexameric ring-like arrangement composed of 3 Rrp41-Rrp42 heterodimers.

It localises to the cytoplasm. In terms of biological role, non-catalytic component of the exosome, which is a complex involved in RNA degradation. Increases the RNA binding and the efficiency of RNA degradation. Confers strong poly(A) specificity to the exosome. The protein is Exosome complex component Rrp4 of Nitrosopumilus maritimus (strain SCM1).